The primary structure comprises 201 residues: Holliday junction branch migration complex subunit RuvA (201 aa).

Residues 1 to 63 (MIEYVRGELA…EDAYVLYGFA (63 aa)) form a domain I region. Positions 64-142 (DKQEREIFLL…TMGATVAGGS (79 aa)) are domain II. Residues 143–151 (ASAGMLLQS) form a flexible linker region. Residues 152–201 (ASVEVQEEAVAALTMLGFAAAPSQKVVLAILKEEPDAPVEKVIKLALKRL) are domain III.

It belongs to the RuvA family. Homotetramer. Forms an RuvA(8)-RuvB(12)-Holliday junction (HJ) complex. HJ DNA is sandwiched between 2 RuvA tetramers; dsDNA enters through RuvA and exits via RuvB. An RuvB hexamer assembles on each DNA strand where it exits the tetramer. Each RuvB hexamer is contacted by two RuvA subunits (via domain III) on 2 adjacent RuvB subunits; this complex drives branch migration. In the full resolvosome a probable DNA-RuvA(4)-RuvB(12)-RuvC(2) complex forms which resolves the HJ.

The protein resides in the cytoplasm. Its function is as follows. The RuvA-RuvB-RuvC complex processes Holliday junction (HJ) DNA during genetic recombination and DNA repair, while the RuvA-RuvB complex plays an important role in the rescue of blocked DNA replication forks via replication fork reversal (RFR). RuvA specifically binds to HJ cruciform DNA, conferring on it an open structure. The RuvB hexamer acts as an ATP-dependent pump, pulling dsDNA into and through the RuvAB complex. HJ branch migration allows RuvC to scan DNA until it finds its consensus sequence, where it cleaves and resolves the cruciform DNA. The chain is Holliday junction branch migration complex subunit RuvA from Bacteroides thetaiotaomicron (strain ATCC 29148 / DSM 2079 / JCM 5827 / CCUG 10774 / NCTC 10582 / VPI-5482 / E50).